Reading from the N-terminus, the 301-residue chain is Glycine--tRNA ligase alpha subunit (301 aa).

It belongs to the class-II aminoacyl-tRNA synthetase family. As to quaternary structure, tetramer of two alpha and two beta subunits.

It is found in the cytoplasm. The enzyme catalyses tRNA(Gly) + glycine + ATP = glycyl-tRNA(Gly) + AMP + diphosphate. This chain is Glycine--tRNA ligase alpha subunit, found in Shewanella loihica (strain ATCC BAA-1088 / PV-4).